A 77-amino-acid polypeptide reads, in one-letter code: MAISAEELEKILKKSFPSSVIKITDLVGDQDHYALEISDAQFNGLSLINQHKLVKNALSEILNKKLHSISIKTISIP.

This is an uncharacterized protein from Rickettsia prowazekii (strain Madrid E).